The primary structure comprises 392 residues: Phosphoglycerate kinase (392 aa).

Residues 19-21 (DYN), Arg34, 57-60 (HLGR), Arg116, and Arg149 contribute to the substrate site. ATP-binding positions include Lys199, Glu321, and 347–350 (GGDS).

Belongs to the phosphoglycerate kinase family. In terms of assembly, monomer.

It is found in the cytoplasm. The catalysed reaction is (2R)-3-phosphoglycerate + ATP = (2R)-3-phospho-glyceroyl phosphate + ADP. It participates in carbohydrate degradation; glycolysis; pyruvate from D-glyceraldehyde 3-phosphate: step 2/5. The sequence is that of Phosphoglycerate kinase from Thermomicrobium roseum (strain ATCC 27502 / DSM 5159 / P-2).